The primary structure comprises 293 residues: Phosphatidylserine decarboxylase proenzyme (293 aa).

Catalysis depends on charge relay system; for autoendoproteolytic cleavage activity residues Asp88, His144, and Ser247. Catalysis depends on Ser247, which acts as the Schiff-base intermediate with substrate; via pyruvic acid; for decarboxylase activity. Ser247 is modified (pyruvic acid (Ser); by autocatalysis).

Belongs to the phosphatidylserine decarboxylase family. PSD-B subfamily. Prokaryotic type I sub-subfamily. Heterodimer of a large membrane-associated beta subunit and a small pyruvoyl-containing alpha subunit. Pyruvate serves as cofactor. In terms of processing, is synthesized initially as an inactive proenzyme. Formation of the active enzyme involves a self-maturation process in which the active site pyruvoyl group is generated from an internal serine residue via an autocatalytic post-translational modification. Two non-identical subunits are generated from the proenzyme in this reaction, and the pyruvate is formed at the N-terminus of the alpha chain, which is derived from the carboxyl end of the proenzyme. The autoendoproteolytic cleavage occurs by a canonical serine protease mechanism, in which the side chain hydroxyl group of the serine supplies its oxygen atom to form the C-terminus of the beta chain, while the remainder of the serine residue undergoes an oxidative deamination to produce ammonia and the pyruvoyl prosthetic group on the alpha chain. During this reaction, the Ser that is part of the protease active site of the proenzyme becomes the pyruvoyl prosthetic group, which constitutes an essential element of the active site of the mature decarboxylase.

The protein localises to the cell membrane. It catalyses the reaction a 1,2-diacyl-sn-glycero-3-phospho-L-serine + H(+) = a 1,2-diacyl-sn-glycero-3-phosphoethanolamine + CO2. The protein operates within phospholipid metabolism; phosphatidylethanolamine biosynthesis; phosphatidylethanolamine from CDP-diacylglycerol: step 2/2. Catalyzes the formation of phosphatidylethanolamine (PtdEtn) from phosphatidylserine (PtdSer). This chain is Phosphatidylserine decarboxylase proenzyme, found in Xylella fastidiosa (strain M12).